Here is a 669-residue protein sequence, read N- to C-terminus: DNA helicase/primase complex-associated protein (669 aa).

The tract at residues 502 to 526 (RSTAGTGGEPNPRHITGPDTEGNGE) is disordered.

The protein belongs to the herpesviridae HEPA family. As to quaternary structure, associates with the primase and the helicase to form the helicase-primase complex. Interacts with the origin-binding protein. Interacts with the polymerase catalytic subunit.

The protein localises to the host nucleus. Component of the helicase/primase complex. Unwinds the DNA at the replication forks and generates single-stranded DNA for both leading and lagging strand synthesis. The primase synthesizes short RNA primers on the lagging strand that the polymerase presumably elongates using dNTPs. The primase-associated factor has no known catalytic activity in the complex and may serve to facilitate the formation of the replisome by directly interacting with the origin-binding protein and the polymerase. This is DNA helicase/primase complex-associated protein (ORF40) from Human herpesvirus 8 type P (isolate GK18) (HHV-8).